The chain runs to 114 residues: Pro-FMRFamide-related neuropeptide FF (114 aa).

The first 21 residues, 1–21 (MDSKWAAVLLLLLLLRNWGHA), serve as a signal peptide directing secretion. Positions 22–69 (EEAGSWGEDQVFAEEDKGPHPSQYAHTPDRIQTPGSLMRVLLQAMERP) are excised as a propeptide. The disordered stretch occupies residues 29–51 (EDQVFAEEDKGPHPSQYAHTPDR). Phe-82 is subject to Phenylalanine amide. Residues 85-100 (NAWGPWSKEQLSPQAR) constitute a propeptide that is removed on maturation. The residue at position 111 (Phe-111) is a Phenylalanine amide.

This sequence belongs to the FARP (FMRFamide related peptide) family.

It is found in the secreted. Morphine modulating peptides. Have wide-ranging physiologic effects, including the modulation of morphine-induced analgesia, elevation of arterial blood pressure, and increased somatostatin secretion from the pancreas. Neuropeptide FF and SF potentiate and sensitize ASIC2 and ASIC3 channels. This Rattus norvegicus (Rat) protein is Pro-FMRFamide-related neuropeptide FF (Npff).